The sequence spans 223 residues: Protein-disulfide oxidoreductase DsbI (223 aa).

Residues 26–46 form a helical membrane-spanning segment; sequence LLWLLMAVAMGALIILAHSFF. Residues C55 and C58 are joined by a disulfide bond. 2 helical membrane passes run 59-78 and 82-102; these read VYIRYAMFVMVIGGLVAAIN and IILKLIGCVMAFYGSILGLKF. Cysteines 127 and 153 form a disulfide. A helical membrane pass occupies residues 198–218; it reads CMLAFGMCLVLLVIMSGAWAL.

The protein belongs to the DsbB family. DsbI subfamily. Interacts with DsbL.

Its subcellular location is the cell inner membrane. Required for disulfide bond formation in some proteins. Part of a redox system composed of DsbI and DsbL that mediates formation of an essential disulfide bond in AssT. This Escherichia coli O1:K1 / APEC protein is Protein-disulfide oxidoreductase DsbI.